The following is a 449-amino-acid chain: FAD-linked oxidoreductase janO (449 aa).

The FAD-binding PCMH-type domain maps to 32 to 203; the sequence is PDAQPLAIIK…TRFHLNTRPL (172 aa).

It belongs to the oxygen-dependent FAD-linked oxidoreductase family. Requires FAD as cofactor.

It participates in secondary metabolite biosynthesis. Functionally, FAD-linked oxidoreductase; part of the gene cluster that mediates the biosynthesis of the indole diterpenes janthitremanes such as shearinine K or shearinine A. The geranylgeranyl diphosphate (GGPP) synthase janG catalyzes the first step in janthitremane biosynthesis via conversion of farnesyl pyrophosphate and isopentyl pyrophosphate into geranylgeranyl pyrophosphate (GGPP). Condensation of indole-3-glycerol phosphate with GGPP by the prenyl transferase janC then forms 3-geranylgeranylindole (3-GGI). Epoxidation by the FAD-dependent monooxygenase janM leads to a epoxidized-GGI that is substrate of the terpene cyclase janB for cyclization to yield paspaline. Paspaline is subsequently converted to 13-desoxypaspaline by the cytochrome P450 monooxygenase janP, via beta-PC-M6 in a series of alpha-face oxidations. The cytochrome P450 monooxygenase janQ is proposed to carry out sequential beta-face oxidation steps at C-7 and C-13 of 13-desoxypaspaline to form paspalicine and paspalinine respectively. The indole diterpene prenyltransferase janD may then convert paspalinine into shearinine K which is substrate of janO and/or additional enzymes for oxidation and cyclization to generate shearinine A. The chain is FAD-linked oxidoreductase janO from Penicillium janthinellum (Penicillium vitale).